The sequence spans 240 residues: Ornithine decarboxylase antizyme (240 aa).

Disordered regions lie at residues 18–45 (RSEPISSSNRATKRTISSSSSSSSSSAG) and 69–95 (DHDRASPLKEYNRKTSIDSTTTASSEF). Residues 21 to 33 (PISSSNRATKRTI) show a composition bias toward polar residues. The segment covering 34-43 (SSSSSSSSSS) has biased composition (low complexity). A compositionally biased stretch (basic and acidic residues) spans 69-84 (DHDRASPLKEYNRKTS). A compositionally biased stretch (polar residues) spans 85–95 (IDSTTTASSEF).

The protein belongs to the ODC antizyme family. As to quaternary structure, interacts with ODC1 and thereby sterically blocks ODC homodimerization. In terms of tissue distribution, preferentially expressed in adult female midguts.

Its function is as follows. Ornithine decarboxylase (ODC) antizyme protein that negatively regulates ODC activity and intracellular polyamine biosynthesis and uptake in response to increased intracellular polyamine levels. Binds to ODC monomers, inhibiting the assembly of the functional ODC homodimer, and targets the monomers for ubiquitin-independent proteolytic destruction by the 26S proteasome. In Aedes aegypti (Yellowfever mosquito), this protein is Ornithine decarboxylase antizyme (Oda).